The sequence spans 731 residues: MMQAQESLTLEDVAVDFTWEEWQFLSPAQKDLYRDVMLENYSNLVAVGYQASKPDALSKLERGEETCTTEDEIYSRICSEIRKIDDPLQHHLQNQSIQKSVKQCHEQNMFGNIVNQNKGHFLLKQDCDTFDLHEKPLKSNLSFENQKRSSGLKNSAEFNRDGKSLFHANHKQFYTEMKFPAIAKPINKSQFIKQQRTHNIENAHVCSECGKAFLKLSQFIDHQRVHTGEKPHVCSMCGKAFSRKSRLMDHQRTHTELKHYECTECDKTFLKKSQLNIHQKTHMGGKPYTCSQCGKAFIKKCRLIYHQRTHTGEKPHGCSVCGKAFSTKFSLTTHQKTHTGEKPYICSECGKGFIEKRRLTAHHRTHTGEKPFICNKCGKGFTLKNSLITHQQTHTGEKLYTCSECGKGFSMKHCLMVHQRTHTGEKPYKCNECGKGFALKSPLIRHQRTHTGEKPYVCTECRKGFTMKSDLIVHQRTHTAEKPYICNDCGKGFTVKSRLIVHQRTHTGEKPYVCGECGKGFPAKIRLMGHQRTHTGEKPYICNECGKGFTEKSHLNVHRRTHTGEKPYVCSECGKGLTGKSMLIAHQRTHTGEKPYICNECGKGFTMKSTLSIHQQTHTGEKPYKCNECDKTFRKKTCLIQHQRFHTGKTSFACTECGKFSLRKNDLITHQRIHTGEKPYKCSDCGKAFTTKSGLNVHQRKHTGERPYGCSDCGKAFAHLSILVKHRRIHR.

Positions 8–79 constitute a KRAB domain; it reads LTLEDVAVDF…EDEIYSRICS (72 aa). 19 consecutive C2H2-type zinc fingers follow at residues 204–226, 232–254, 260–282, 288–310, 316–338, 344–366, 372–394, 400–422, 428–450, 456–478, 484–506, 512–534, 540–562, 568–590, 596–618, 624–646, 652–674, 680–702, and 708–730; these read HVCS…QRVH, HVCS…QRTH, YECT…QKTH, YTCS…QRTH, HGCS…QKTH, YICS…HRTH, FICN…QQTH, YKCN…QRTH, YVCT…QRTH, YICN…QRTH, YVCG…QRTH, YICN…RRTH, YVCS…QRTH, YICN…QQTH, YKCN…QRFH, FACT…QRIH, YKCS…QRKH, and YGCS…RRIH.

It belongs to the krueppel C2H2-type zinc-finger protein family.

The protein localises to the nucleus. In terms of biological role, may be involved in transcriptional regulation. The protein is Zinc finger protein 615 (ZNF615) of Homo sapiens (Human).